The primary structure comprises 295 residues: Pyridoxal 5'-phosphate synthase subunit PdxS (295 aa).

Residue Asp23 coordinates D-ribose 5-phosphate. The Schiff-base intermediate with D-ribose 5-phosphate role is filled by Lys80. Residue Gly152 coordinates D-ribose 5-phosphate. Arg164 serves as a coordination point for D-glyceraldehyde 3-phosphate. D-ribose 5-phosphate-binding positions include Gly213 and 234-235 (GS).

This sequence belongs to the PdxS/SNZ family. As to quaternary structure, in the presence of PdxT, forms a dodecamer of heterodimers.

The catalysed reaction is aldehydo-D-ribose 5-phosphate + D-glyceraldehyde 3-phosphate + L-glutamine = pyridoxal 5'-phosphate + L-glutamate + phosphate + 3 H2O + H(+). Its pathway is cofactor biosynthesis; pyridoxal 5'-phosphate biosynthesis. Its function is as follows. Catalyzes the formation of pyridoxal 5'-phosphate from ribose 5-phosphate (RBP), glyceraldehyde 3-phosphate (G3P) and ammonia. The ammonia is provided by the PdxT subunit. Can also use ribulose 5-phosphate and dihydroxyacetone phosphate as substrates, resulting from enzyme-catalyzed isomerization of RBP and G3P, respectively. This Methanosphaera stadtmanae (strain ATCC 43021 / DSM 3091 / JCM 11832 / MCB-3) protein is Pyridoxal 5'-phosphate synthase subunit PdxS.